Reading from the N-terminus, the 384-residue chain is Cell division protein FtsZ (384 aa).

GTP contacts are provided by residues 20 to 24 (GGGGN), 107 to 109 (GTG), glutamate 138, arginine 142, and asparagine 186.

This sequence belongs to the FtsZ family. As to quaternary structure, homodimer. Polymerizes to form a dynamic ring structure in a strictly GTP-dependent manner. Interacts directly with several other division proteins.

Its subcellular location is the cytoplasm. Essential cell division protein that forms a contractile ring structure (Z ring) at the future cell division site. The regulation of the ring assembly controls the timing and the location of cell division. One of the functions of the FtsZ ring is to recruit other cell division proteins to the septum to produce a new cell wall between the dividing cells. Binds GTP and shows GTPase activity. In Wigglesworthia glossinidia brevipalpis, this protein is Cell division protein FtsZ.